Here is a 79-residue protein sequence, read N- to C-terminus: Defensin-1 (79 aa).

An N-terminal signal peptide occupies residues 1–23 (MKFLNVVAIALLVVACLAVYSNA). Intrachain disulfides connect Cys42–Cys69, Cys55–Cys75, and Cys59–Cys77.

This sequence belongs to the invertebrate defensin family. Type 1 subfamily.

It localises to the secreted. The polypeptide is Defensin-1 (SMD1) (Stomoxys calcitrans (Stable fly)).